We begin with the raw amino-acid sequence, 514 residues long: 2,3-bisphosphoglycerate-independent phosphoglycerate mutase (514 aa).

Residues Asp14 and Ser64 each coordinate Mn(2+). Ser64 serves as the catalytic Phosphoserine intermediate. Substrate-binding positions include His125, 155–156, Arg187, Arg193, 263–266, and Lys336; these read RD and RADR. Residues Asp403, His407, Asp444, His445, and His463 each coordinate Mn(2+).

This sequence belongs to the BPG-independent phosphoglycerate mutase family. In terms of assembly, monomer. Mn(2+) serves as cofactor.

The enzyme catalyses (2R)-2-phosphoglycerate = (2R)-3-phosphoglycerate. The protein operates within carbohydrate degradation; glycolysis; pyruvate from D-glyceraldehyde 3-phosphate: step 3/5. Its function is as follows. Catalyzes the interconversion of 2-phosphoglycerate and 3-phosphoglycerate. This Shewanella sp. (strain W3-18-1) protein is 2,3-bisphosphoglycerate-independent phosphoglycerate mutase.